The sequence spans 86 residues: Cell division topological specificity factor (86 aa).

The protein belongs to the MinE family.

Its function is as follows. Prevents the cell division inhibition by proteins MinC and MinD at internal division sites while permitting inhibition at polar sites. This ensures cell division at the proper site by restricting the formation of a division septum at the midpoint of the long axis of the cell. This Allorhizobium ampelinum (strain ATCC BAA-846 / DSM 112012 / S4) (Agrobacterium vitis (strain S4)) protein is Cell division topological specificity factor.